Reading from the N-terminus, the 301-residue chain is Single-stranded DNA-binding protein (301 aa).

The LAST stretch occupies residues 3 to 7 (KRKST). Zn(2+) is bound by residues His64, Cys77, Cys87, and Cys90. The segment at 272 to 301 (TKTEDDFMSSSSGSSSSADDTDLDDLLNDL) is disordered. Over residues 279–289 (MSSSSGSSSSA) the composition is skewed to low complexity. Residues 290 to 301 (DDTDLDDLLNDL) show a composition bias toward acidic residues.

This sequence belongs to the Tequatrovirus single-stranded DNA-binding protein family. Homodimer in the absence of DNA, monomer when binding DNA. Interacts with the DNA helicase assembly protein; a ternary complex between the helicase assembly protein, the single-stranded DNA-binding protein and ssDNA is an obligatory intermediate in the helicase loading mechanism. Part of the replicase complex that includes the DNA polymerase, the polymerase clamp, the clamp loader complex, the single-stranded DNA binding protein, the primase, the DnaB-like SF4 replicative helicase and the helicase assembly factor. Interacts (via C-terminus) with the viral SF1 dDA helicase. Interacts with the viral SF2 UvsW repair helicase.

In terms of biological role, single-stranded DNA-binding protein that participates in viral DNA replication, recombination, and repair. Coats the lagging-strand ssDNA as the replication fork advances. Stimulates the activities of viral DNA polymerase and DnaB-like SF4 replicative helicase, probably via its interaction with the helicase assembly factor. Stimulates the unwinding activity of UvsW helicase, inhibits it DNA winding activity. Together with DnaB-like SF4 replicative helicase and the helicase assembly factor, promotes pairing of two homologous DNA molecules containing complementary single-stranded regions and mediates homologous DNA strand exchange. Also promotes the formation of joint molecules. mRNA specific autogenous translational repressor. The polypeptide is Single-stranded DNA-binding protein (Escherichia coli (Bacteriophage T4)).